An 883-amino-acid polypeptide reads, in one-letter code: Phosphoenolpyruvate carboxylase (883 aa).

Residues H141 and K547 contribute to the active site.

This sequence belongs to the PEPCase type 1 family. Requires Mg(2+) as cofactor.

The catalysed reaction is oxaloacetate + phosphate = phosphoenolpyruvate + hydrogencarbonate. Its function is as follows. Forms oxaloacetate, a four-carbon dicarboxylic acid source for the tricarboxylic acid cycle. The protein is Phosphoenolpyruvate carboxylase of Chromohalobacter salexigens (strain ATCC BAA-138 / DSM 3043 / CIP 106854 / NCIMB 13768 / 1H11).